Reading from the N-terminus, the 215-residue chain is Translation initiation factor IF-3 (215 aa).

The segment at 159–215 (SAEVQQPPKREGRNMIMFLGPRKTPLQKDKPEQATKAERTLPIAKPPGKTAAPAAAN) is disordered. The span at 184 to 197 (LQKDKPEQATKAER) shows a compositional bias: basic and acidic residues. Positions 200–215 (PIAKPPGKTAAPAAAN) are enriched in low complexity.

This sequence belongs to the IF-3 family. Monomer.

The protein resides in the cytoplasm. Functionally, IF-3 binds to the 30S ribosomal subunit and shifts the equilibrium between 70S ribosomes and their 50S and 30S subunits in favor of the free subunits, thus enhancing the availability of 30S subunits on which protein synthesis initiation begins. The sequence is that of Translation initiation factor IF-3 from Synechococcus sp. (strain RCC307).